We begin with the raw amino-acid sequence, 43 residues long: Large ribosomal subunit protein uL5 (43 aa).

Belongs to the universal ribosomal protein uL5 family. In terms of assembly, part of the 50S ribosomal subunit; part of the 5S rRNA/L5/L18/L25 subcomplex. Contacts the 5S rRNA and the P site tRNA. Forms a bridge to the 30S subunit in the 70S ribosome.

Its function is as follows. This is one of the proteins that bind and probably mediate the attachment of the 5S RNA into the large ribosomal subunit, where it forms part of the central protuberance. In the 70S ribosome it contacts protein S13 of the 30S subunit (bridge B1b), connecting the 2 subunits; this bridge is implicated in subunit movement. Contacts the P site tRNA; the 5S rRNA and some of its associated proteins might help stabilize positioning of ribosome-bound tRNAs. This is Large ribosomal subunit protein uL5 (rplE) from Proteus vulgaris.